The primary structure comprises 357 residues: Dual-specificity RNA methyltransferase RlmN (357 aa).

E89 functions as the Proton acceptor in the catalytic mechanism. The Radical SAM core domain occupies 109–340 (EGEKYTVCVS…CTIRESKALD (232 aa)). A disulfide bridge links C116 with C345. [4Fe-4S] cluster contacts are provided by C123, C127, and C130. S-adenosyl-L-methionine is bound by residues 173–174 (GE), S203, 226–228 (SLH), and N302. C345 functions as the S-methylcysteine intermediate in the catalytic mechanism.

Belongs to the radical SAM superfamily. RlmN family. [4Fe-4S] cluster is required as a cofactor.

It is found in the cytoplasm. The enzyme catalyses adenosine(2503) in 23S rRNA + 2 reduced [2Fe-2S]-[ferredoxin] + 2 S-adenosyl-L-methionine = 2-methyladenosine(2503) in 23S rRNA + 5'-deoxyadenosine + L-methionine + 2 oxidized [2Fe-2S]-[ferredoxin] + S-adenosyl-L-homocysteine. The catalysed reaction is adenosine(37) in tRNA + 2 reduced [2Fe-2S]-[ferredoxin] + 2 S-adenosyl-L-methionine = 2-methyladenosine(37) in tRNA + 5'-deoxyadenosine + L-methionine + 2 oxidized [2Fe-2S]-[ferredoxin] + S-adenosyl-L-homocysteine. Specifically methylates position 2 of adenine 2503 in 23S rRNA and position 2 of adenine 37 in tRNAs. m2A2503 modification seems to play a crucial role in the proofreading step occurring at the peptidyl transferase center and thus would serve to optimize ribosomal fidelity. This chain is Dual-specificity RNA methyltransferase RlmN, found in Helicobacter pylori (strain J99 / ATCC 700824) (Campylobacter pylori J99).